The chain runs to 179 residues: Large ribosomal subunit protein uL5 (179 aa).

Belongs to the universal ribosomal protein uL5 family. Part of the 50S ribosomal subunit; part of the 5S rRNA/L5/L18/L25 subcomplex. Contacts the 5S rRNA and the P site tRNA. Forms a bridge to the 30S subunit in the 70S ribosome.

In terms of biological role, this is one of the proteins that bind and probably mediate the attachment of the 5S RNA into the large ribosomal subunit, where it forms part of the central protuberance. In the 70S ribosome it contacts protein S13 of the 30S subunit (bridge B1b), connecting the 2 subunits; this bridge is implicated in subunit movement. Contacts the P site tRNA; the 5S rRNA and some of its associated proteins might help stabilize positioning of ribosome-bound tRNAs. In Salmonella agona (strain SL483), this protein is Large ribosomal subunit protein uL5.